The primary structure comprises 1746 residues: MGVVTRLLVGTFLASLALPAQGGVLKKVIRHKRQTGVNVTLPEESQPVVFNHVYNIKLPVGSQCSVDLESASGDKDLAAPSEPSESVQEHTVDGENQIVFTHRINIPRRACGCAAAPDVKELLSRLEELENLVSSLREQCTSGAGCCLQPAEGRLDTRPFCSGRGNFSTEGCGCVCEPGWKGPNCSEPECPSNCHLRGQCVDGQCVCNEGFTGEDCSQLACPSDCNDQGKCVNGVCVCFEGYSGVDCSRETCPVPCSEEHGRCVDGRCVCQEGFAGEDCNEPLCLHNCHGRGRCVENECVCDEGFTGEDCGELICPKDCFDRGRCINGTCYCDEGFEGEDCGRLACPHGCRGRGRCEEGQCVCDEGFAGADCSERRCPSDCHNRGRCLDGRCECDDGFEGEDCGELRCPGGCSGHGRCVNGQCVCDEGRTGEDCSQLRCPNDCHGRGRCVQGRCECEHGFQGYDCSEMSCPHDCHQHGRCVNGMCVCDDGYTGEDCRELRCPGDCSQRGRCVDGRCVCEHGFAGPDCADLACPSDCHGRGRCVNGQCVCHEGFTGKDCGQRRCPGDCHGQGRCVDGQCVCHEGFTGLDCGQRSCPNDCSNWGQCVSGRCICNEGYSGEDCSQVSPPKDLIVTEVTEETVNLAWDNEMRVTEYLIVYTPTHEDGLEMQFRVPGDQTSTTIRELEPGVEYFIRVFAILENKKSIPVSARVATYLPTPEGLKFKSIKETSVEVEWDPLDIAFETWEIIFRNMNKEDEGEITKSLRRPETTYRQTGLAPGQEYEISLHIVKNNTRGPGLKRVTTTRLDAPSQIEAKDVTDTTALITWFKPLAEIDGIELTYGIKDVPGDRTTIDLTHEENQYSIGNLKPDTEYEVSLISRRADMSSNPAKETFTTGLDAPRNLRRISQTDNSITLEWRNGKAAADTYRIKYAPISGGDHAEVEVPRSPQTTTKATLTGLRPGTEYGIGVSAVKGDKESDPATINAATDLDPPKDFRVSELKESSLTLLWRTPLAKFDRYRLNYGLPSGQPVEVQLPRNATSYILRGLEPGQEYTILLTAEKGRHKSKPARVKASTAGEPEIGNLSVSDITPESFSLSWTATEGAFETFTIEIIDSNRFLETMEYNISGAERTAHISGLRPGNDFIVYLSGLAPGIQTKPISATATTEAEPEVDNLLVSDATPDGFRLSWTADEGVFDSFVLKIRDTKKQSEPLEITLLASERTRDITGLREATEYEIELYGISSGKRSQPVSAIATTAMGSPKEITFSDITENSATVSWMVPTAQVESFRITYVPITGGAPSVVTVDGTKTQTRLLRLLPGVEYLVSVIAVKGFEESEPVSGTLTTALDGPSGLVTANITDSEALAMWQPAIAPVDHYVISYTGDRVPEITRTVSGNTVEYALTNLEPATEYTLRIFAEKGPQKSSTITTKFTTDLDSPRDLTATEVQSETALLTWRPPRASVTGYLLVYESVDGTLKEVVVGPETTSYSLSGLSPSTHYTARIQALNGPLRSKMSQTVFTTIGLLYPFPRDCSQAMLNGDTTSGLYTIYVNNDKAQKLEVFCDMTSDSGGWIVFLRRKNGREDFYRNWKAYAAGFGDLKEEFWLGLDALSKITAQGQYELRVDLRDHGETAYAVYDRFSVGDARTRYKLKVEGYSGTAGDSMAYHNGRSFSTFDKDTDSAITNCALSYKGAFWYKNCHRVNLMGRYGDNSHSQGVNWFHWKGHEYSIQFAEMKLRPSNFRNLEGRRKRA.

An N-terminal signal peptide occupies residues 1–22 (MGVVTRLLVGTFLASLALPAQG). The interval 23–185 (GVLKKVIRHK…CEPGWKGPNC (163 aa)) is involved in hexamer formation. The N-linked (GlcNAc...) asparagine glycan is linked to Asn38. Phosphoserine is present on residues Ser65, Ser70, and Ser72. O-linked (Xyl...) (chondroitin sulfate) serine glycosylation occurs at Ser72. The stretch at 118-145 (DVKELLSRLEELENLVSSLREQCTSGAG) forms a coiled coil. N-linked (GlcNAc...) asparagine glycans are attached at residues Asn166 and Asn184. Positions 174–186 (CVCEPGWKGPNCS) constitute an EGF-like 1; incomplete domain. 14 EGF-like domains span residues 187–217 (EPEC…EDCS), 218–249 (QLAC…DCSR), 250–280 (ETCP…EDCN), 281–311 (EPLC…EDCG), 312–342 (ELIC…EDCG), 343–373 (RLAC…ADCS), 374–404 (ERRC…EDCG), 405–435 (ELRC…EDCS), 436–466 (QLRC…YDCS), 467–497 (EMSC…EDCR), 498–528 (ELRC…PDCA), 529–559 (DLAC…KDCG), 560–589 (QRRC…GLDC), and 590–620 (GQRS…GEDC). 42 disulfides stabilise this stretch: Cys190/Cys200, Cys194/Cys205, Cys207/Cys216, Cys221/Cys231, Cys225/Cys236, Cys238/Cys247, Cys252/Cys263, Cys256/Cys268, Cys270/Cys279, Cys284/Cys294, Cys288/Cys299, Cys301/Cys310, Cys315/Cys325, Cys319/Cys330, Cys332/Cys341, Cys346/Cys356, Cys350/Cys361, Cys363/Cys372, Cys377/Cys387, Cys381/Cys392, Cys394/Cys403, Cys408/Cys418, Cys412/Cys423, Cys425/Cys434, Cys439/Cys449, Cys443/Cys454, Cys456/Cys465, Cys470/Cys480, Cys474/Cys485, Cys487/Cys496, Cys501/Cys511, Cys505/Cys516, Cys518/Cys527, Cys532/Cys542, Cys536/Cys547, Cys549/Cys558, Cys563/Cys573, Cys567/Cys578, Cys580/Cys589, Cys594/Cys604, Cys598/Cys609, and Cys611/Cys620. A glycan (N-linked (GlcNAc...) asparagine) is linked at Asn327. Fibronectin type-III domains are found at residues 625-717 (PPKD…TPEG), 718-801 (LKFK…VTTT), 805-894 (APSQ…TGLD), 895-988 (APRN…LDPP), 989-1075 (KDFR…AGEP), 1076-1166 (EIGN…EAEP), 1167-1256 (EVDN…TAMG), 1257-1346 (SPKE…ALDG), 1347-1433 (PSGL…TDLD), and 1434-1522 (SPRD…IGLL). Asn788 is a glycosylation site (N-linked (GlcNAc...) asparagine). Phosphothreonine is present on Thr905. Residues Asn1034, Asn1079, and Asn1121 are each glycosylated (N-linked (GlcNAc...) asparagine). Asn1354 carries N-linked (GlcNAc...) asparagine glycosylation. Positions 1520 to 1735 (GLLYPFPRDC…FAEMKLRPSN (216 aa)) constitute a Fibrinogen C-terminal domain.

The protein belongs to the tenascin family. Homohexamer; disulfide-linked. A homotrimer may be formed in the triple coiled-coil region and may be stabilized by disulfide rings at both ends. Two of such half-hexabrachions may be disulfide linked within the central globule. Interacts with CSPG4. Interacts (via the 3rd fibronectin type-III domain) with integrin ITGA9:ITGB1. In terms of tissue distribution, submaxillary glands and brain.

It is found in the secreted. The protein resides in the extracellular space. The protein localises to the extracellular matrix. In terms of biological role, extracellular matrix protein implicated in guidance of migrating neurons as well as axons during development, synaptic plasticity as well as neuronal regeneration. Promotes neurite outgrowth from cortical neurons grown on a monolayer of astrocytes. Ligand for integrins alpha-8/beta-1, alpha-9/beta-1, alpha-V/beta-3 and alpha-V/beta-6. In tumors, stimulates angiogenesis by elongation, migration and sprouting of endothelial cells. The polypeptide is Tenascin (TNC) (Sus scrofa (Pig)).